The primary structure comprises 143 residues: Nucleoside diphosphate kinase (143 aa).

ATP is bound by residues K11, F59, R87, T93, R104, and N114. H117 functions as the Pros-phosphohistidine intermediate in the catalytic mechanism.

Belongs to the NDK family. As to quaternary structure, homotetramer. Mg(2+) serves as cofactor.

It localises to the cytoplasm. The enzyme catalyses a 2'-deoxyribonucleoside 5'-diphosphate + ATP = a 2'-deoxyribonucleoside 5'-triphosphate + ADP. It catalyses the reaction a ribonucleoside 5'-diphosphate + ATP = a ribonucleoside 5'-triphosphate + ADP. Its function is as follows. Major role in the synthesis of nucleoside triphosphates other than ATP. The ATP gamma phosphate is transferred to the NDP beta phosphate via a ping-pong mechanism, using a phosphorylated active-site intermediate. The chain is Nucleoside diphosphate kinase from Thioalkalivibrio sulfidiphilus (strain HL-EbGR7).